A 191-amino-acid polypeptide reads, in one-letter code: dTTP/UTP pyrophosphatase (191 aa).

Asp-64 functions as the Proton acceptor in the catalytic mechanism.

Belongs to the Maf family. YhdE subfamily. Requires a divalent metal cation as cofactor.

It is found in the cytoplasm. The catalysed reaction is dTTP + H2O = dTMP + diphosphate + H(+). It catalyses the reaction UTP + H2O = UMP + diphosphate + H(+). Its function is as follows. Nucleoside triphosphate pyrophosphatase that hydrolyzes dTTP and UTP. May have a dual role in cell division arrest and in preventing the incorporation of modified nucleotides into cellular nucleic acids. In Thermosipho africanus (strain TCF52B), this protein is dTTP/UTP pyrophosphatase.